The primary structure comprises 271 residues: Chitinase 6 (271 aa).

The signal sequence occupies residues 1–20; sequence MARRLSLLAVVLAMVAAVSA. Residues 25–60 form the Chitin-binding type-1 domain; that stretch reads AQSCGCASDQCCSKWGFCGTGSDYCGTGCQAGPCDV. 6 disulfide bridges follow: C28–C36, C30–C42, C35–C49, C88–C137, C150–C159, and C239–C271. E132 functions as the Proton donor in the catalytic mechanism. N268 is a glycosylation site (N-linked (GlcNAc...) asparagine).

This sequence belongs to the glycosyl hydrolase 19 family. Chitinase class IV subfamily. As to expression, expressed in roots, leaves, sheaths and meristems.

The enzyme catalyses Random endo-hydrolysis of N-acetyl-beta-D-glucosaminide (1-&gt;4)-beta-linkages in chitin and chitodextrins.. May function in reproductive organs during embryogenesis and seed maturation. The polypeptide is Chitinase 6 (Cht6) (Oryza sativa subsp. japonica (Rice)).